A 584-amino-acid polypeptide reads, in one-letter code: MPVTDRSIPSLLKEQADQRPNETAFTFLDYDLDPNGFAETLTWSQVYARACVVADELTMYGVPGDRVAILAPQGLEYIVAFLGALQAGFIGVPLSTPQYGVHDERVSAVLRDSQPVAILTTSAVVGDVTKYASSQDGQPAPSVIEVDLLDLDTPRPQQALPQPASGSAYLQYTSGSTRTPAGVIVSHENVIANVTQSLYGYFGGPDKFPADTTVVSWLPLFHDMGLILGICAPLVTGCTAVLLSPMSFLRRPARWMQLLASHPKCFSAAPNFAFELAVRRTTDEDLAGLDLGDVLGIVSGSERIHVATIKRFTERFAPFNLSPAAVRPSYGLAEATLYVAAPEPGTTPRTVRFDYESLTAGHARPCRADGSVGTELISYGSPDPSAVRIVNPETMIENPSGTVGEIWAHGEHVAMGYWQKPEQSDRTFNARIVNPAPGTPEGPWLRTGDLGVMSNGELFIMGRIKDLVIVDGRNHYPDDIEATIQEITGGRVAAIAVPDNITEQLVAIIELKRRGASAEEAMVKLRSVKREITSAISKSHSLRVADVVLVPPGSIPITTSGKIRRAACVERYRSDGFNRLDVTV.

This sequence belongs to the ATP-dependent AMP-binding enzyme family.

It catalyses the reaction holo-[(phenol)carboxyphthiodiolenone synthase] + a long-chain fatty acid + ATP = a long-chain fatty acyl-[(phenol)carboxyphthiodiolenone synthase] + AMP + diphosphate. It carries out the reaction eicosanoate + holo-[(phenol)carboxyphthiodiolenone synthase] + ATP = icosanoyl-[(phenol)carboxyphthiodiolenone synthase] + AMP + diphosphate. The catalysed reaction is holo-[(phenol)carboxyphthiodiolenone synthase] + docosanoate + ATP = docosanoyl-[(phenol)carboxyphthiodiolenone synthase] + AMP + diphosphate. The protein operates within lipid metabolism; fatty acid biosynthesis. In terms of biological role, catalyzes the activation of long-chain fatty acids as acyl-adenylates (acyl-AMP), which are then transferred to the multifunctional polyketide synthase PpsA for further chain extension. Catalyzes the adenylation of the long-chain fatty acids eicosanoate (C20) or docosanoate (C22), and potentially the very-long-chain fatty acid lignocerate (C24). Involved in the biosynthesis of phthiocerol dimycocerosate (DIM A) and phthiodiolone dimycocerosate (DIM B). The protein is Long-chain-fatty-acid--AMP ligase FadD26 of Mycobacterium marinum (strain ATCC BAA-535 / M).